The following is a 562-amino-acid chain: Formate--tetrahydrofolate ligase (562 aa).

Residue 71-78 (TPAGEGKS) participates in ATP binding.

The protein belongs to the formate--tetrahydrofolate ligase family.

The catalysed reaction is (6S)-5,6,7,8-tetrahydrofolate + formate + ATP = (6R)-10-formyltetrahydrofolate + ADP + phosphate. The protein operates within one-carbon metabolism; tetrahydrofolate interconversion. The polypeptide is Formate--tetrahydrofolate ligase (Bacillus cereus (strain G9842)).